A 148-amino-acid chain; its full sequence is MSEQPFWQQKTLDDMSDAEWESLCDGCGQCCLHKLMDEDTDEIYFTNVACRQLNIKTCQCRNYARRFEYEPDCIKLTRENLPTFEWLPPTCAYRLLAEGKPLPAWHPLLTGSKAAMHGERISVRHIAVPESTVVDWQDHILNLPDRAR.

It belongs to the UPF0260 family.

This is UPF0260 protein KPN78578_22800 from Klebsiella pneumoniae subsp. pneumoniae (strain ATCC 700721 / MGH 78578).